A 170-amino-acid polypeptide reads, in one-letter code: Fimbrial protein (170 aa).

Positions 1–7 (MNTLQKG) are cleaved as a propeptide — leader sequence. N-methylphenylalanine is present on F8. A helical transmembrane segment spans residues 8 to 28 (FTLIELMIVIAIVGILAAVAL). S70 carries an O-linked (Gal...) serine glycan. S100 is modified (O-(sn-1-glycerophosphoryl)serine). Residues C127 and C163 are joined by a disulfide bond.

It belongs to the N-Me-Phe pilin family. In terms of assembly, the pili are polar flexible filaments of about 5.4 nanometers diameter and 2.5 micrometers average length; they consist of only a single polypeptide chain arranged in a helical configuration of five subunits per turn in the assembled pilus. Post-translationally, O-linked glycan has been reported to consist either of the Gal(alpha1-3) GlcNAc disaccharide, or the Gal(beta 1-4) Gal(alpha 1-3) 2,4-diacetamido-2,4,6-trideoxyhexose trisaccharide.

It localises to the fimbrium. The protein resides in the membrane. Functionally, major component of the type IV pilus (T4P) that plays a role in cellular adherence, microcolony formation as well as twitching motility. This is Fimbrial protein (pilE) from Neisseria meningitidis serogroup B (strain ATCC BAA-335 / MC58).